We begin with the raw amino-acid sequence, 332 residues long: L-lactate dehydrogenase (332 aa).

NAD(+) contacts are provided by residues 29–57 (GQVG…CADK) and R99. Substrate-binding residues include R106, N138, and R169. N138 serves as a coordination point for NAD(+). Residue H193 is the Proton acceptor of the active site. T248 lines the substrate pocket.

It belongs to the LDH/MDH superfamily. LDH family. Homotetramer.

The protein localises to the cytoplasm. The enzyme catalyses (S)-lactate + NAD(+) = pyruvate + NADH + H(+). It participates in fermentation; pyruvate fermentation to lactate; (S)-lactate from pyruvate: step 1/1. The protein is L-lactate dehydrogenase of Drosophila melanogaster (Fruit fly).